The primary structure comprises 338 residues: Glycerol-3-phosphate dehydrogenase [NAD(P)+] (338 aa).

Residues Ser-13, Trp-14, and Lys-108 each coordinate NADPH. 3 residues coordinate sn-glycerol 3-phosphate: Lys-108, Gly-139, and Ser-141. Ala-143 is a binding site for NADPH. Sn-glycerol 3-phosphate-binding residues include Lys-194, Asp-247, Ser-257, Arg-258, and Asn-259. The active-site Proton acceptor is the Lys-194. Arg-258 serves as a coordination point for NADPH. NADPH contacts are provided by Val-282 and Glu-284.

It belongs to the NAD-dependent glycerol-3-phosphate dehydrogenase family.

It is found in the cytoplasm. The catalysed reaction is sn-glycerol 3-phosphate + NAD(+) = dihydroxyacetone phosphate + NADH + H(+). It carries out the reaction sn-glycerol 3-phosphate + NADP(+) = dihydroxyacetone phosphate + NADPH + H(+). It participates in membrane lipid metabolism; glycerophospholipid metabolism. Functionally, catalyzes the reduction of the glycolytic intermediate dihydroxyacetone phosphate (DHAP) to sn-glycerol 3-phosphate (G3P), the key precursor for phospholipid synthesis. In Listeria monocytogenes serotype 4a (strain HCC23), this protein is Glycerol-3-phosphate dehydrogenase [NAD(P)+].